We begin with the raw amino-acid sequence, 457 residues long: MPPAALQATVSESVKDAIISKLRQPPSAVPSREWSAETRTSLTPADAGIAEARASAEDIELVDLQHHNFSEPRKRIVSPASLSRFEHSQAFAEILAFICVCNTRVVGKTLTEEIQISSACRTILEMLDQVAALRESTPPDASIGSSRFGNPAFRTFYAKIRENTDRLHRMIPGLETDSEWSRAARAELSVYFQECWGNEKRIDYGSGMELNMACWLLCLCKLRILRLPEDGACIVLRIFWTYVQVMRDIQSSYWLEPAGSHGVWGLDDYHFLPFLWGAGQLSSHRHLRPKAIHDAEIVDEFAPKYMYLACIQFINSVKTASLRWHSPMLDDISGAKSWSKVNQGMIKMYRAEVLKKLPIAQHIFFGSLLRFPEPATGELEEEDVEEDAHGHIHPAGKPHAHGTGEGQAAGWGDCCGIPIPSAFAAAEQEKKRQQGNFSSTMLGEKPFGTGVRRIPFD.

2 disordered regions span residues 387–407 (DAHG…GEGQ) and 426–457 (AEQE…IPFD). Basic residues predominate over residues 391–400 (HIHPAGKPHA).

This sequence belongs to the PTPA-type PPIase family.

Its subcellular location is the cytoplasm. The catalysed reaction is [protein]-peptidylproline (omega=180) = [protein]-peptidylproline (omega=0). PPIases accelerate the folding of proteins. It catalyzes the cis-trans isomerization of proline imidic peptide bonds in oligopeptides. Acts as a regulatory subunit for PP2A-like phosphatases modulating their activity or substrate specificity, probably by inducing a conformational change in the catalytic subunit, a direct target of the PPIase. Can reactivate inactive phosphatase PP2A-phosphatase methylesterase complexes (PP2Ai) in presence of ATP and Mg(2+) by dissociating the inactive form from the complex. The polypeptide is Serine/threonine-protein phosphatase 2A activator 2 (RRD2) (Mycosarcoma maydis (Corn smut fungus)).